The sequence spans 4306 residues: Cytoplasmic dynein 2 heavy chain 1 (4306 aa).

Positions 1-1650 (MAGSLGDVRK…YVQMVDSELQ (1650 aa)) are stem. 145 to 152 (LGIVLRKS) serves as a coordination point for ATP. The stretch at 669 to 696 (KELEGYIQKLQNAAERLATENRRLRKWH) forms a coiled coil. AAA stretches follow at residues 1651-1875 (YTYE…VLRG), 1941-2161 (SALK…KQND), 2249-2505 (LTAD…WVLG), and 2617-2862 (HYGR…ESCK). ATP-binding positions include 1689 to 1696 (GPAGTGKT), 1979 to 1986 (GPSGAGKS), 2291 to 2298 (GPEGCGKG), and 2655 to 2662 (GRSGVGRR). Positions 2880-3168 (AISSSKKKEL…AEVSKAQETI (289 aa)) are stalk. Coiled-coil stretches lie at residues 2896-2981 (LQAG…KEVQ), 3108-3199 (LETE…LATL), and 3407-3441 (IQHE…SLLE). AAA regions lie at residues 3243-3472 (LCTE…LIQD) and 3689-3904 (MALF…VIDR).

It belongs to the dynein heavy chain family. As to quaternary structure, the cytoplasmic dynein complex 2 is probably composed by a heavy chain DYNC2H1 homodimer and a number of DYNC2LI1 light intermediate chains. As to expression, detected in brain, lung, spleen and kidney (at protein level). Enriched in the ependymal layer lining the lateral ventricles (at protein level).

It localises to the cytoplasm. Its subcellular location is the cytoskeleton. The protein localises to the cilium axoneme. It is found in the cell membrane. In terms of biological role, may function as a motor for intraflagellar retrograde transport. Functions in cilia biogenesis. According to PubMed:8666668, it may play a role in transport between endoplasmic reticulum and Golgi or organization of the Golgi in cells. The polypeptide is Cytoplasmic dynein 2 heavy chain 1 (Dync2h1) (Mus musculus (Mouse)).